The following is a 319-amino-acid chain: MSDNTLVSDYGMCEEEQMARIAWFYYHDGLTQSEISERLGLTRLKVSRLLEKGHQSGIIRVQINSRFEGCLEYENALRNHFALQNIRVLPALPDADIGLRLGIGAAHMLMESLRPQQLLAVGFGEATMTTLKHLSGFISAQQIRLVTLSGGVGPYMTGIGQLDAACSVSIMPAPLRASSQEIACTLRNENSVRDVMLTAQAADAAIVGIGAINQKDQASILKSGYITQGEQLMIGRKGAVGDILGYFFDAHGEIIPGIKIHNELIGLKLNSLSTIPTVIGVAGGEQKAEAIIAAMRGNYINALVTDQKTAGKIIQLIEK.

The H-T-H motif DNA-binding region spans 32-55 (QSEISERLGLTRLKVSRLLEKGHQ).

Belongs to the SorC transcriptional regulatory family.

It localises to the cytoplasm. Inactivated by phosphorylated autoinducer-2 (phospho-AI-2). Phospho-AI-2 acts by binding to LsrR, which is then unable to bind to the promoter regions, allowing the transcription of the target genes. Its function is as follows. Transcriptional regulator that represses the expression of the lsr operon in the absence of the quorum-sensing signaling molecule autoinducer 2 (AI-2). It also represses the expression of the lsrRK operon. Acts by binding to the intergenic region between the lsr operon and lsrR. In the presence of phosphorylated autoinducer-2 (phospho-AI-2), LsrR is inactivated, leading to the transcription of the genes. This Salmonella choleraesuis (strain SC-B67) protein is Transcriptional regulator LsrR (lsrR).